Consider the following 513-residue polypeptide: OBERON-like protein (513 aa).

The PHD-type zinc-finger motif lies at 166–235 (NGFCNLCMCV…VFRCQACSXT (70 aa)). The stretch at 372-469 (RELADKAREA…LYEKIKLQES (98 aa)) forms a coiled coil. A disordered region spans residues 493–513 (YNGPPKADSQSNDCHPFRTNP). Residues 500–513 (DSQSNDCHPFRTNP) show a composition bias toward polar residues.

As to quaternary structure, self-interacts and probably forms heteromers. Binds to VPg of pea seed borne mosaic virus (PSbMV), turnip mosaic virus (TuMV) and lettuce mosaic virus (LMV), but not with VPg of tobacco etch virus (TEV), cowpea mosaic virus (CPMV), tomato black ring virus (TBRV) and grapevine fan leaf virus (GFLV).

Its subcellular location is the nucleus. Functionally, required for the maintenance and/or establishment of both the shoot and root meristems, probably by controlling the expression of the meristem genes and of genes required for auxin responses. Involved in the development of the basal pole and in auxin-mediated root and vascular development in the embryo. Confers sensitivity to turnip mosaic virus (TuMV) probably by promoting viral movement and multiplication via interaction with TuMV VPg. The polypeptide is OBERON-like protein (PVIP) (Pisum sativum (Garden pea)).